The sequence spans 730 residues: Aspyridones cluster regulator apdR (730 aa).

Positions 20–46 form a DNA-binding region, zn(2)-C6 fungal-type; that stretch reads CTECRRRKIRCDQATPCRHCEKAALRC.

The protein localises to the nucleus. In terms of biological role, transcription factor involved in regulation of gene cluster that mediates the biosynthesis of aspyridones. This is Aspyridones cluster regulator apdR from Emericella nidulans (strain FGSC A4 / ATCC 38163 / CBS 112.46 / NRRL 194 / M139) (Aspergillus nidulans).